The primary structure comprises 896 residues: Probable sodium/sulfate cotransporter 3 (896 aa).

5 helical membrane-spanning segments follow: residues Met-1–Ile-21, Ile-47–Tyr-69, Val-106–Leu-126, Leu-140–Ser-160, and Met-186–Leu-206. RCK C-terminal domains follow at residues Leu-212–Leu-296, Thr-319–Asn-404, Leu-408–Leu-493, and Glu-499–Val-586. The next 7 helical transmembrane spans lie at Met-602–Lys-622, Tyr-626–Met-646, Ala-654–Glu-674, Ala-685–Val-705, Leu-734–Ile-754, Phe-776–Cys-796, and Val-804–Leu-824. The tract at residues Arg-857–Pro-881 is disordered. Positions Val-868–Pro-881 are enriched in polar residues.

It belongs to the divalent anion:Na+ symporter (DASS) superfamily. Na+/sulfate symporter (TC 2.A.47.4) family.

Its subcellular location is the cell membrane. In terms of biological role, na(+)/sulfate cotransporter with a probable low-affinity for sulfate. This is Probable sodium/sulfate cotransporter 3 (SLT3) from Chlamydomonas reinhardtii (Chlamydomonas smithii).